Consider the following 338-residue polypeptide: Peroxidase 15 (338 aa).

An N-terminal signal peptide occupies residues 1 to 22; it reads MARIGSFLIILYLIYALTLCIC. Disulfide bonds link Cys45-Cys125, Cys78-Cys83, Cys131-Cys332, and Cys210-Cys242. The active-site Proton acceptor is His76. Ca(2+) is bound by residues Asp77, Val80, Gly82, Asp84, and Ser86. Residue Pro173 coordinates substrate. Asn176 is a glycosylation site (N-linked (GlcNAc...) asparagine). A heme b-binding site is contributed by His203. Position 204 (Thr204) interacts with Ca(2+). N-linked (GlcNAc...) asparagine glycans are attached at residues Asn219 and Asn250. Positions 255, 258, and 263 each coordinate Ca(2+).

Belongs to the peroxidase family. Classical plant (class III) peroxidase subfamily. It depends on heme b as a cofactor. Requires Ca(2+) as cofactor.

The protein localises to the secreted. It catalyses the reaction 2 a phenolic donor + H2O2 = 2 a phenolic radical donor + 2 H2O. Removal of H(2)O(2), oxidation of toxic reductants, biosynthesis and degradation of lignin, suberization, auxin catabolism, response to environmental stresses such as wounding, pathogen attack and oxidative stress. These functions might be dependent on each isozyme/isoform in each plant tissue. This Arabidopsis thaliana (Mouse-ear cress) protein is Peroxidase 15 (PER15).